Consider the following 408-residue polypeptide: Protein SPATA31F3 (408 aa).

A helical transmembrane segment spans residues V11–V31. Positions Q51 to E71 are disordered. S152 carries the post-translational modification Phosphoserine. Disordered regions lie at residues T297–A316 and L351–S408. Residues L351–T392 show a composition bias toward polar residues.

This sequence belongs to the SPATA31 family.

The protein localises to the membrane. This is Protein SPATA31F3 (SPATA31F3) from Bos taurus (Bovine).